A 551-amino-acid chain; its full sequence is RCC1 and BTB domain-containing protein 2 (551 aa).

RCC1 repeat units lie at residues 64-115, 117-169, 171-222, 223-274, 276-326, and 328-382; these read NDEI…VLAT, DGEV…VLTS, GEVF…AVVD, TGEV…VLTD, GQIY…AAKS, and GGHV…TVAE. One can recognise a BTB domain in the interval 394–457; the sequence is ADLKFLVDGK…LYTDNISLPP (64 aa).

Its subcellular location is the cytoplasmic vesicle. It localises to the secretory vesicle. It is found in the acrosome. This Rattus norvegicus (Rat) protein is RCC1 and BTB domain-containing protein 2 (Rcbtb2).